Reading from the N-terminus, the 314-residue chain is Synaptophysin (314 aa).

At 1–25 (MLLLADMDVVNQLVAGGQFRVVKEP) the chain is on the cytoplasmic side. The region spanning 21–228 (VVKEPLGFVK…NLWFVFKETG (208 aa)) is the MARVEL domain. A helical membrane pass occupies residues 26–49 (LGFVKVLQWVFAIFAFATCGSYTG). The Vesicular segment spans residues 50–107 (ELRLSVECANKTESALNIEVEFEYPFRLHQVYFDAPSCVKGGTTKIFLVGDYSSSAEF). N59 carries N-linked (GlcNAc...) asparagine glycosylation. Y81 is modified (phosphotyrosine). A helical transmembrane segment spans residues 108–131 (FVTVAVFAFLYSMGALATYIFLQN). The Cytoplasmic segment spans residues 132 to 138 (KYRENNK). A helical transmembrane segment spans residues 139–162 (GPMMDFLATAVFAFMWLVSSSAWA). Topologically, residues 163-200 (KGLSDVKMATDPENIIKEMPMCRQTGNTCKELRDPVTS) are vesicular. Residues 201–224 (GLNTSVVFGFLNLVLWVGNLWFVF) form a helical membrane-spanning segment. At 225–314 (KETGWAAPFM…GAPTSFSNQM (90 aa)) the chain is on the cytoplasmic side. T227 carries the post-translational modification Phosphothreonine. Residues 239-314 (GAPEKQPAPG…GAPTSFSNQM (76 aa)) form a disordered region. The span at 254-264 (AGYGQGPGGYG) shows a compositional bias: gly residues. Residues 255–305 (GYGQGPGGYGPQDSYGPQGGYQPDYGQPASGGGGGYGPQGDYGQQGYGQQG) form a repeats, Gly-rich region. The segment covering 265–282 (PQDSYGPQGGYQPDYGQP) has biased composition (low complexity). Residues Y279 and Y296 each carry the phosphotyrosine modification. The span at 283–303 (ASGGGGGYGPQGDYGQQGYGQ) shows a compositional bias: gly residues.

The protein belongs to the synaptophysin/synaptobrevin family. Homohexamer or homotetramer. Interacts with SRCIN1. Interacts with VAMP2; the interaction is inhibited by interaction of VAPM2 with SEPT8. Ubiquitinated; mediated by SIAH1 or SIAH2 and leading to its subsequent proteasomal degradation. In terms of processing, phosphorylated by SRC.

The protein localises to the cytoplasmic vesicle. It localises to the secretory vesicle. It is found in the synaptic vesicle membrane. Its subcellular location is the synapse. The protein resides in the synaptosome. Possibly involved in structural functions as organizing other membrane components or in targeting the vesicles to the plasma membrane. Involved in the regulation of short-term and long-term synaptic plasticity. In Mus musculus (Mouse), this protein is Synaptophysin (Syp).